The sequence spans 446 residues: MPEYLSVSTLTKYLKMKFERDPYLERVYLTGQVSNFRRRPNHQYFSLKDEKAVIQVTIWSGVYQKLGFELEEGMKINVIGRVQLYEPSGSYSIIIEKAEPDGIGALAIQFEQLKKKLGEEGLFQDKFKQSLPQFPKKIGVVTSPSGAVIRDIITTVSRRFPGVEIVLYPTKVQGDGAAAQIADHIRLANERSDLDVLIIGRGGGSIEDLWAFNEEETVRAIFESRIPVISSVGHETDTTLADFAADRRAATPTAAAELATPVTKLDLLGHLQQQENRMSRAISNRLSYYRERLNKLTQSVIFRQPERLYDGHLQKLDQLNLRLKQKIREYYSEEKQRVKILQHRLEALNPHSRVQRLQEQTAQLERLLRSNMAVIYDNKVAQVRRLSEALLMLDTSRIVARGYAIVQKNQKVIESSAGIEEKDELTLLMRDGQLEVEVKHVQRKEI.

Belongs to the XseA family. Heterooligomer composed of large and small subunits.

Its subcellular location is the cytoplasm. It carries out the reaction Exonucleolytic cleavage in either 5'- to 3'- or 3'- to 5'-direction to yield nucleoside 5'-phosphates.. In terms of biological role, bidirectionally degrades single-stranded DNA into large acid-insoluble oligonucleotides, which are then degraded further into small acid-soluble oligonucleotides. This chain is Exodeoxyribonuclease 7 large subunit, found in Streptococcus gordonii (strain Challis / ATCC 35105 / BCRC 15272 / CH1 / DL1 / V288).